The chain runs to 133 residues: Egg protein CP422 (133 aa).

Residues 1–21 form the signal peptide; the sequence is MHECMIVFFIFAVVSIYYADA. Intrachain disulfides connect Cys-107–Cys-121, Cys-114–Cys-125, and Cys-120–Cys-130.

The protein resides in the secreted. This Schistosoma japonicum (Blood fluke) protein is Egg protein CP422 (CP422).